The chain runs to 1064 residues: Carbamoyl phosphate synthase large chain (1064 aa).

Residues 1 to 401 (MPKRNDIKKI…SLLKAVRSLE (401 aa)) form a carboxyphosphate synthetic domain region. ATP contacts are provided by R129, R169, G175, G176, E208, I210, E215, G241, V242, H243, Q284, and E298. In terms of domain architecture, ATP-grasp 1 spans 133-327 (KELCESINEP…IAKMSAKIAI (195 aa)). Mg(2+) is bound by residues Q284, E298, and N300. The Mn(2+) site is built by Q284, E298, and N300. The segment at 402–546 (IGVFHNEMTE…YSTYEWENES (145 aa)) is oligomerization domain. A carbamoyl phosphate synthetic domain region spans residues 547–929 (KRSDKEKIIV…ALYKSFEAAK (383 aa)). Residues 671-861 (EKALQDLDIP…MAQLATQMIL (191 aa)) form the ATP-grasp 2 domain. R707, S746, L748, E752, G777, V778, H779, S780, Q820, and E832 together coordinate ATP. Positions 820, 832, and 834 each coordinate Mg(2+). Positions 820, 832, and 834 each coordinate Mn(2+). The region spanning 930–1064 (LHMADYGSVL…QSRSFTTKNI (135 aa)) is the MGS-like domain. Residues 930–1064 (LHMADYGSVL…QSRSFTTKNI (135 aa)) form an allosteric domain region.

Belongs to the CarB family. As to quaternary structure, composed of two chains; the small (or glutamine) chain promotes the hydrolysis of glutamine to ammonia, which is used by the large (or ammonia) chain to synthesize carbamoyl phosphate. Tetramer of heterodimers (alpha,beta)4. Mg(2+) serves as cofactor. Mn(2+) is required as a cofactor.

It carries out the reaction hydrogencarbonate + L-glutamine + 2 ATP + H2O = carbamoyl phosphate + L-glutamate + 2 ADP + phosphate + 2 H(+). The enzyme catalyses hydrogencarbonate + NH4(+) + 2 ATP = carbamoyl phosphate + 2 ADP + phosphate + 2 H(+). The protein operates within amino-acid biosynthesis; L-arginine biosynthesis; carbamoyl phosphate from bicarbonate: step 1/1. It participates in pyrimidine metabolism; UMP biosynthesis via de novo pathway; (S)-dihydroorotate from bicarbonate: step 1/3. Large subunit of the glutamine-dependent carbamoyl phosphate synthetase (CPSase). CPSase catalyzes the formation of carbamoyl phosphate from the ammonia moiety of glutamine, carbonate, and phosphate donated by ATP, constituting the first step of 2 biosynthetic pathways, one leading to arginine and/or urea and the other to pyrimidine nucleotides. The large subunit (synthetase) binds the substrates ammonia (free or transferred from glutamine from the small subunit), hydrogencarbonate and ATP and carries out an ATP-coupled ligase reaction, activating hydrogencarbonate by forming carboxy phosphate which reacts with ammonia to form carbamoyl phosphate. This is Carbamoyl phosphate synthase large chain from Lactococcus lactis subsp. cremoris (strain MG1363).